A 511-amino-acid polypeptide reads, in one-letter code: MDRSESAESAESRRRRAEESGQGQLFRFWDELSPAEKEALLEQLEMLEPRELREHCQRAREAYVRESSAPQRLDDRMQPVPPEFLGSVRHSGTGELERWEREGFHQIAQNKVAVLLLAGGQGTRLGVTYPKGMYSVGLPSAKTLYQIQAERIRRLQQLASERHGETCTVPWYIMTSEFTLGPTRKFFEDHAYFGLERSDVVMFEQRMLPAVGFDGAAILEDKAKLAMAPDGNGGLYRALSDNRILEDMEGRGIQYVHVYCVDNILVKMADPVFIGFCVSKGADCGAKVVEKGYPAEPVGVVCRVDGVYQVVEYSEISPETAEKRNPNGALTFTAGNICNHFFTVPFLRAVIGSLEPRLNYHVAIKKVPYVDNEGNLVKPTSPNGIKMEKFVFDVFQFAKNFVAFEVLREEEFSPLKNADTADKDTPTTARRALLWQHYRWARRAGTHFLDETGSPIRDSHSISGEGDPPAVCEISPLVSYFGEGLESYMKDKDVSSFPFVLESSDAGPVPV.

Residues 1–19 are compositionally biased toward basic and acidic residues; sequence MDRSESAESAESRRRRAEE. The disordered stretch occupies residues 1–22; that stretch reads MDRSESAESAESRRRRAEESGQ. The short motif at 117–120 is the Substrate binding element; the sequence is LAGG. UTP contacts are provided by residues 117 to 120, Lys131, Gln205, and Gly231; that span reads LAGG. Substrate is bound at residue Asn232. A UTP-binding site is contributed by Asp262. Residues 312-313 carry the Substrate binding motif; the sequence is EY. Lys386 contacts UTP. Lys416 contributes to the substrate binding site.

The protein belongs to the UDPGP type 1 family.

In Xenopus tropicalis (Western clawed frog), this protein is UDP-N-acetylhexosamine pyrophosphorylase-like protein 1 (uap1l1).